The following is a 278-amino-acid chain: Cytoplasmic envelopment protein 1 (278 aa).

Belongs to the herpesviridae cytoplasmic envelopment protein 1 family. As to quaternary structure, interacts with BSRF1 tegument protein; the BBRF2-BSRF1 complexes oligomerize and might play a role in tethering the viral nucleocapsids to the host Golgi membrane during secondary envelopment.

The protein resides in the virion. The protein localises to the virion tegument. It is found in the host cytoplasm. Its subcellular location is the host Golgi apparatus. Plays a critical role in cytoplasmic virus egress. Participates in the final step of tegumentation and envelope acquisition within the host cytoplasm. The protein is Cytoplasmic envelopment protein 1 of Homo sapiens (Human).